A 455-amino-acid chain; its full sequence is MTRPVVAIIGRPNVGKSTLVNRLCRSREAIVHDQPGVTRDRTYQDGYWGDREFKVVDTGGLVFDDDSEFLPEIREQAALALEEASVALVIVDGQQGLTAADESIAEFLRSHRCPTLLAVNKCESPEQGLAMAGEFWSLGLGEPHPISAIHGAGTGELLDQVLTFLPPKDQEGDEEEPIQMAIIGRPNVGKSSLLNAICGEQRAIVSPIRGTTRDTIDTSIIRENRPWRLVDTAGIRRRRSVNYGPEFFGINRSFKAIERSDVCVLVIDALDGVTEQDQRLAGRIEEDGRACVVVVNKWDALEKDSHTMTAMEKELRSKLYFLDWAPMLFTSALTGQRVESIFALAALAVEQHRRRVSTSVVNEVLKEALSWRSPPTTRGGRQGKLYYGTQVASRPPSFTLFVNDPKMFGETYRRYVERQIREGLGFDGSPLRLFWRGKQQRDAERDLARQQSRKG.

EngA-type G domains lie at 4 to 169 (PVVA…PPKD) and 178 to 353 (IQMA…EQHR). GTP-binding positions include 10–17 (GRPNVGKS), 57–61 (DTGGL), 120–123 (NKCE), 184–191 (GRPNVGKS), 231–235 (DTAGI), and 296–299 (NKWD). The KH-like domain occupies 354 to 439 (RRVSTSVVNE…PLRLFWRGKQ (86 aa)).

Belongs to the TRAFAC class TrmE-Era-EngA-EngB-Septin-like GTPase superfamily. EngA (Der) GTPase family. In terms of assembly, associates with the 50S ribosomal subunit.

Its function is as follows. GTPase that plays an essential role in the late steps of ribosome biogenesis. The polypeptide is GTPase Der (Synechococcus sp. (strain CC9605)).